A 458-amino-acid polypeptide reads, in one-letter code: Exodeoxyribonuclease 7 large subunit (458 aa).

It belongs to the XseA family. As to quaternary structure, heterooligomer composed of large and small subunits.

Its subcellular location is the cytoplasm. The enzyme catalyses Exonucleolytic cleavage in either 5'- to 3'- or 3'- to 5'-direction to yield nucleoside 5'-phosphates.. Bidirectionally degrades single-stranded DNA into large acid-insoluble oligonucleotides, which are then degraded further into small acid-soluble oligonucleotides. In Serratia proteamaculans (strain 568), this protein is Exodeoxyribonuclease 7 large subunit.